The chain runs to 224 residues: tRNA (guanine-N(7)-)-methyltransferase (224 aa).

Residues Glu54, Glu79, Asp106, and Asp129 each contribute to the S-adenosyl-L-methionine site. Residue Asp129 is part of the active site. The substrate site is built by Lys133 and Asp165.

It belongs to the class I-like SAM-binding methyltransferase superfamily. TrmB family.

It catalyses the reaction guanosine(46) in tRNA + S-adenosyl-L-methionine = N(7)-methylguanosine(46) in tRNA + S-adenosyl-L-homocysteine. It participates in tRNA modification; N(7)-methylguanine-tRNA biosynthesis. Its function is as follows. Catalyzes the formation of N(7)-methylguanine at position 46 (m7G46) in tRNA. The polypeptide is tRNA (guanine-N(7)-)-methyltransferase (Chlamydia felis (strain Fe/C-56) (Chlamydophila felis)).